The primary structure comprises 473 residues: 3-isopropylmalate dehydratase large subunit (473 aa).

[4Fe-4S] cluster contacts are provided by C355, C415, and C418. The interval 423–452 (PDQLAPGERSASTSNRNFEGRQGKGGRTHL) is disordered.

This sequence belongs to the aconitase/IPM isomerase family. LeuC type 1 subfamily. As to quaternary structure, heterodimer of LeuC and LeuD. [4Fe-4S] cluster is required as a cofactor.

It carries out the reaction (2R,3S)-3-isopropylmalate = (2S)-2-isopropylmalate. Its pathway is amino-acid biosynthesis; L-leucine biosynthesis; L-leucine from 3-methyl-2-oxobutanoate: step 2/4. Its function is as follows. Catalyzes the isomerization between 2-isopropylmalate and 3-isopropylmalate, via the formation of 2-isopropylmaleate. This Corynebacterium jeikeium (strain K411) protein is 3-isopropylmalate dehydratase large subunit.